Consider the following 533-residue polypeptide: CWF19-like protein 1 homolog (533 aa).

The segment at 290-314 (EMGGAEDGAGNGRKRHNDGGNDGPR) is disordered.

This sequence belongs to the CWF19 family.

This chain is CWF19-like protein 1 homolog, found in Caenorhabditis elegans.